Reading from the N-terminus, the 380-residue chain is Nucleoporin Nup43 (380 aa).

Met-1 is modified (N-acetylmethionine). 6 WD repeats span residues 8–57, 72–110, 127–166, 170–208, 215–255, and 259–299; these read FVSQ…NLDS, RHHGDVMDLQFFDQERIVAASSTGCVTVFLHHPNNQTLS, PSYSSAPCTGVVCNNPEIVTVGEDGRINLFRADHKEAVRT, ADSSTLHAVTFLRTPEILTVNSIGQLKIWDFRQQGNEPS, GDRV…MPVS, and AHEA…PEKS.

In terms of assembly, component of the Nup107-160 subcomplex of the nuclear pore complex (NPC). The Nup107-160 subcomplex includes NUP160, NUP133, NUP107, NUP98, NUP85, NUP43, NUP37, SEH1 and SEC13.

The protein localises to the chromosome. Its subcellular location is the centromere. The protein resides in the kinetochore. It localises to the nucleus. It is found in the nuclear pore complex. Component of the Nup107-160 subcomplex of the nuclear pore complex (NPC). The Nup107-160 subcomplex is required for the assembly of a functional NPC. The Nup107-160 subcomplex is also required for normal kinetochore microtubule attachment, mitotic progression and chromosome segregation. In Homo sapiens (Human), this protein is Nucleoporin Nup43 (NUP43).